Reading from the N-terminus, the 117-residue chain is Ribosome-binding factor A (117 aa).

Belongs to the RbfA family. Monomer. Binds 30S ribosomal subunits, but not 50S ribosomal subunits or 70S ribosomes.

The protein resides in the cytoplasm. Its function is as follows. One of several proteins that assist in the late maturation steps of the functional core of the 30S ribosomal subunit. Associates with free 30S ribosomal subunits (but not with 30S subunits that are part of 70S ribosomes or polysomes). Required for efficient processing of 16S rRNA. May interact with the 5'-terminal helix region of 16S rRNA. The sequence is that of Ribosome-binding factor A from Nitrosomonas europaea (strain ATCC 19718 / CIP 103999 / KCTC 2705 / NBRC 14298).